A 195-amino-acid chain; its full sequence is Holliday junction branch migration complex subunit RuvA (195 aa).

The tract at residues 1 to 62 is domain I; the sequence is MIEFVKGPVA…EDQQTLYGFR (62 aa). The interval 63–141 is domain II; the sequence is SRRERELFNK…ELAPDYVPNE (79 aa). The interval 141–145 is flexible linker; sequence EGLFA. Positions 146–195 are domain III; that stretch reads QGASELDEACEALVALGYSEREIAKVRKALSGEILTTDAYIKRALQLLLK.

The protein belongs to the RuvA family. As to quaternary structure, homotetramer. Forms an RuvA(8)-RuvB(12)-Holliday junction (HJ) complex. HJ DNA is sandwiched between 2 RuvA tetramers; dsDNA enters through RuvA and exits via RuvB. An RuvB hexamer assembles on each DNA strand where it exits the tetramer. Each RuvB hexamer is contacted by two RuvA subunits (via domain III) on 2 adjacent RuvB subunits; this complex drives branch migration. In the full resolvosome a probable DNA-RuvA(4)-RuvB(12)-RuvC(2) complex forms which resolves the HJ.

The protein resides in the cytoplasm. The RuvA-RuvB-RuvC complex processes Holliday junction (HJ) DNA during genetic recombination and DNA repair, while the RuvA-RuvB complex plays an important role in the rescue of blocked DNA replication forks via replication fork reversal (RFR). RuvA specifically binds to HJ cruciform DNA, conferring on it an open structure. The RuvB hexamer acts as an ATP-dependent pump, pulling dsDNA into and through the RuvAB complex. HJ branch migration allows RuvC to scan DNA until it finds its consensus sequence, where it cleaves and resolves the cruciform DNA. In Exiguobacterium sp. (strain ATCC BAA-1283 / AT1b), this protein is Holliday junction branch migration complex subunit RuvA.